A 2149-amino-acid chain; its full sequence is MNHVTIKQSDTRADPFRVFIFGDQSSCNLSNLQLLLFKKSNVYLASFIDQVNLTLRHEIARLTAAERQSFPAFSSIQNLVARALKKDTSVALESTLATIYHLCCFLNYFGDGQEAYPTGPTTHVSGLCIGALAAAAVSSSKSLAELVQAGIDAVRVSLKVGLLVARTAALFSHQESNGTSSSPWSYAVPDSQLPLALAEEAIESYQAKTNIPPLSLPYISAKGQNSWTVSGPPAIVQHFLETSQFEKTLRLTRLAVHAPYHAPHIFSAIDVQHIIRAVGPVSSFSSKLSFISSSSSRNLPTGLNFQDLLCRAVEDILILPLDLREAAENIRLVLEATDNVQQCALFPISTGVCPSLKQSFSPATASRVSIVDCIMERATADAGPKSTSGPKPSESKIAIIGMSGRFPESADVEAFWDLLHQGLDVHRPVPPDRYNGELYYDVTGKRKNTCKVMHGCWINEPGLFDAKFFNISPKEAEQSDPGQRLALATAYEALEAAGVVADRTPSTQRDRVGVFYGMTSDDYREVSCGQNVDTYFIPGGNRAFTPGKINYFFKYCGPSVSVDTACSSSLAAIHLACNSIWRNECDTAIAGGTNVMSNPDSFVGLDRGYFLSRTGNCHTFDDEADGYCRADAVGTVILKRLEDAIADHDPILGVISGALTNHSADAVSITRPHSGAQEEIFSKLLTESGVHPHQVSYIEMHGTGTQAGDATEMTSVLNCFAPSTSPRRLPHESLHLGSTKANVGHSESASGVSALIKVLLMMEKNIIPPHCGIKGKINHKFPTDLDQRNVHIARTATQWNRRNEFNNIRRAFVNNFSAAGGNTALLVEDYPLLIADSSQQDARTAHVVTVSAKCIKSLKGNLENLKKFVQKQASTQGFLPKLSYTTTARRMHHPFRVAIPAANSEQLLSALDEELKHDGYTCSSESPVAFVFSGQGSQYSAMGQHLLHFTIFRDEVHAYDILARRHGFPSIMPLIDGSVDIEDLEPLVVQLGTVCVQMALASLWMALGMRPAYVVGHSLGHYAALKVAGVLTASDTIYLVAMRARLLQNKCSRGSHAMLAIRSSADEIQAHLDEGIHDIACISGPQDTVVSGCIDDIDRLSQKLTDKGIKATRVNVPFAFHSAQVDPILDELEATASQVEFHAPRVAIGCPLLGKTFKAGETPSLEANHIRRHCRETVNFLDVLRSAKDDGFVSEKTAWIEIGPHTVCSKLVKANISQDIVAVPSLMRNKDGWQVLASSVAALYRHGSSVAWDEYHHDFEACKQVLRLPAYSWDNKVYWIDYVHDWLLTRGDPPVQAAASLPAPPSSFSTASVHRIVHESVDKGKLTLTAECEFTNEQLREVVYGHVVNGNRVCSSSLYTDFGVTLGSYILEKYRPDLQDHAVDVQDMVVNKALVHKEGPTMLLRIDVVLDMTDSKAASMSIYSVNSKGNKTAEHAQSSLHFERPKVWLKSWDSTQYYVERSIEWLKEKADQGLNSRMSSGVIYKLFSSLVDYSTAYKGMQEAIVNTEDFEATALVRFQVDEGNFRCNPMWVDSCGQLAGFLMNGHAKTPKDQVFINHGWQSFRTVRKFSKDKTYRTYVRMRCIEGTTYAGDVYIFDDEGIVGVCGSITFQGIPRKVLNTAMPPPKSQNEAPVRSAPAKPAAKPPKSASSEHSGHFARHSNIEPLKLDAALKSATTARNPMLAVFKIVSEEIGIPSASVDNGLVFADYGVDSLLSLSISGRLREELDLDVESSAFETCATLADLATHLGLDTFSSDQSSGQSSSSGGLSPRSDSIGEITSSATTPPSLSPRGSVSGSQCKDVCAILAEEIGVSMSEITNDTDLGALGMDSLMSLAVLSRLREELELDLEGDFFVSHPNFSSFKHMFQQGHGDEVESEPSAELKQYRATSTLLQGNPKSALYTLFLLPDGSGSSFSYAPINAVRKDVCVFGLNCPWLKSAEKLVQFGLKGLATLYVEEIRRRAPHGPYNLGGWSAGGICAYEAAIQFTREGETVERLILLDSPNPIGLEKLPARLFDFVNGLGLFGDGKAPDWLLAHFLAFIDALDEWKPVPWDKALGGGNSPPPRTYILWAEDGICKDTDARPEYRDDDPREMKWLLENRTNFGGNNWDVLLGQQSLAIERIQDANHFTMLRKGKNSERVAAFIRSTFG.

The N-terminal acylcarrier protein transacylase domain (SAT) stretch occupies residues 19 to 261; that stretch reads FIFGDQSSCN…TRLAVHAPYH (243 aa). Residues 394–829 enclose the Ketosynthase family 3 (KS3) domain; sequence ESKIAIIGMS…GGNTALLVED (436 aa). Active-site for beta-ketoacyl synthase activity residues include cysteine 566, histidine 701, and histidine 745. The malonyl-CoA:ACP transacylase (MAT) domain stretch occupies residues 929-1233; sequence AFVFSGQGSQ…PSLMRNKDGW (305 aa). Serine 1018 (for acyl/malonyl transferase activity) is an active-site residue. Residues 1310 to 1624 are product template (PT) domain; the sequence is TASVHRIVHE…RKVLNTAMPP (315 aa). The N-terminal hotdog fold stretch occupies residues 1314-1447; that stretch reads HRIVHESVDK…SSLHFERPKV (134 aa). Residues 1314–1619 enclose the PKS/mFAS DH domain; that stretch reads HRIVHESVDK…FQGIPRKVLN (306 aa). Histidine 1346 functions as the Proton acceptor; for dehydratase activity in the catalytic mechanism. Residues 1474–1619 are C-terminal hotdog fold; that stretch reads LNSRMSSGVI…FQGIPRKVLN (146 aa). Residue aspartate 1533 is the Proton donor; for dehydratase activity of the active site. The tract at residues 1619–1657 is disordered; that stretch reads NTAMPPPKSQNEAPVRSAPAKPAAKPPKSASSEHSGHFA. Positions 1635–1650 are enriched in low complexity; that stretch reads SAPAKPAAKPPKSASS. One can recognise a Carrier 1 domain in the interval 1678 to 1752; it reads RNPMLAVFKI…DLATHLGLDT (75 aa). Serine 1712 is subject to O-(pantetheine 4'-phosphoryl)serine. Residues 1755 to 1790 show a composition bias toward low complexity; sequence SDQSSGQSSSSGGLSPRSDSIGEITSSATTPPSLSP. The disordered stretch occupies residues 1755–1796; that stretch reads SDQSSGQSSSSGGLSPRSDSIGEITSSATTPPSLSPRGSVSG. The Carrier 2 domain maps to 1793–1870; sequence SVSGSQCKDV…SFKHMFQQGH (78 aa). Serine 1830 is subject to O-(pantetheine 4'-phosphoryl)serine. Positions 1882-2147 are thioesterase (TE) domain; the sequence is LKQYRATSTL…ERVAAFIRST (266 aa). Serine 1973 (for thioesterase activity) is an active-site residue.

Polyketide synthase; part of the Pks1 gene cluster that mediates the biosynthesis of an anthraquinone derivative pigment that contributes to conidial pigmentation that provides protection from UV radiation, heat and cold stress. The polyketide synthase Pks1 produces 1-acetyl-2,4,6,8-tetrahydroxy-9,10-anthraquinone though condensation of acetyl-CoA with malonyl-CoA. The dehydratase EthD and the laccase Mlac1 further convert the anthraquinone derivative into the final conidial pigment. The protein is Polyketide synthase 1 of Metarhizium majus (strain ARSEF 297).